The following is a 444-amino-acid chain: Glutamyl-tRNA(Gln) amidotransferase subunit D (444 aa).

Positions 92-424 constitute an Asparaginase/glutaminase domain; sequence SEIKIISTGG…EKIQNLMITN (333 aa). Residues T102, T178, D179, and K257 contribute to the active site.

It belongs to the asparaginase 1 family. GatD subfamily. Heterodimer of GatD and GatE.

It catalyses the reaction L-glutamyl-tRNA(Gln) + L-glutamine + ATP + H2O = L-glutaminyl-tRNA(Gln) + L-glutamate + ADP + phosphate + H(+). Functionally, allows the formation of correctly charged Gln-tRNA(Gln) through the transamidation of misacylated Glu-tRNA(Gln) in organisms which lack glutaminyl-tRNA synthetase. The reaction takes place in the presence of glutamine and ATP through an activated gamma-phospho-Glu-tRNA(Gln). The GatDE system is specific for glutamate and does not act on aspartate. The polypeptide is Glutamyl-tRNA(Gln) amidotransferase subunit D (Saccharolobus solfataricus (strain ATCC 35092 / DSM 1617 / JCM 11322 / P2) (Sulfolobus solfataricus)).